We begin with the raw amino-acid sequence, 322 residues long: Transcription initiation factor IIB (322 aa).

Tandem repeats lie at residues Ser125–Leu213 and Asn224–Gln305.

It belongs to the TFIIB family.

In terms of biological role, stabilizes TBP binding to an archaeal box-A promoter. Also responsible for recruiting RNA polymerase II to the pre-initiation complex (DNA-TBP-TFIIB). The sequence is that of Transcription initiation factor IIB from Aeropyrum pernix (strain ATCC 700893 / DSM 11879 / JCM 9820 / NBRC 100138 / K1).